The sequence spans 154 residues: AP-1 complex subunit sigma-3 (154 aa).

The protein belongs to the adaptor complexes small subunit family. Adaptor protein complex 1 (AP-1) is a heterotetramer composed of two large adaptins (gamma-type subunit AP1G1 and beta-type subunit AP1B1), a medium adaptin (mu-type subunit AP1M1 or AP1M2) and a small adaptin (sigma-type subunit AP1S1 or AP1S2 or AP1S3). As to expression, widely expressed.

The protein resides in the golgi apparatus. Its subcellular location is the cytoplasmic vesicle membrane. It is found in the membrane. The protein localises to the clathrin-coated pit. In terms of biological role, subunit of clathrin-associated adaptor protein complex 1 that plays a role in protein sorting in the late-Golgi/trans-Golgi network (TGN) and/or endosomes. The AP complexes mediate both the recruitment of clathrin to membranes and the recognition of sorting signals within the cytosolic tails of transmembrane cargo molecules. Involved in TLR3 trafficking. This Homo sapiens (Human) protein is AP-1 complex subunit sigma-3 (AP1S3).